We begin with the raw amino-acid sequence, 2038 residues long: Non-reducing polyketide synthase ZEA1 (2038 aa).

Residues 9 to 246 (LLFGDQTDSW…NELNIHALQH (238 aa)) are N-terminal acylcarrier protein transacylase domain (SAT). Residues 364–794 (PGRIAIVGMA…GGNACILLED (431 aa)) form the Ketosynthase family 3 (KS3) domain. Catalysis depends on for beta-ketoacyl synthase activity residues Cys537, His672, and His711. The interval 888-1172 (VFVFTGQGSH…VCSSFVRATL (285 aa)) is malonyl-CoA:ACP transacylase (MAT) domain. Catalysis depends on Ser979, which acts as the For acyl/malonyl transferase activity. A product template (PT) domain region spans residues 1221 to 1572 (SLLNLPTYAW…HFHEVENAVL (352 aa)). The segment at 1254–1405 (HETFKANIST…GQLIQARWDK (152 aa)) is N-terminal hotdog fold. The region spanning 1254–1573 (HETFKANIST…FHEVENAVLD (320 aa)) is the PKS/mFAS DH domain. The segment at 1425–1573 (ISHRLQPQIL…FHEVENAVLD (149 aa)) is C-terminal hotdog fold. One can recognise a Carrier domain in the interval 1616-1693 (QSDAHVLDSI…DLRRVFAPKS (78 aa)). O-(pantetheine 4'-phosphoryl)serine is present on Ser1653. Residues 1700–1738 (NDLSRPSLVDDTSQALQSSGSESFDQPPTSVTSTSDSGS) are disordered. Over residues 1709–1737 (DDTSQALQSSGSESFDQPPTSVTSTSDSG) the composition is skewed to polar residues. Residues 1778-1882 (TGTIATYIHL…PRSKTVEDKN (105 aa)) form a thioesterase (TE) domain region. The active-site For thioesterase activity is the His2021.

It functions in the pathway mycotoxin biosynthesis. Its function is as follows. Non-reducing polyketide synthase; part of the gene cluster that mediates the biosynthesis of zearalenone (ZEA), a nonsteroid estrogen that is a contaminant of cereal grains and causes estrogenic disorders in humans and animals. The ZEA backbone is synthesized from a single acetyl-CoA molecule and eight malonyl-CoA molecules. The reducing polyketide synthase ZEA2 is proposed to synthesize a reduced hexaketide intermediate by using different combinations of its reductive domains during each round of condensation. The hexaketide thioester is then transacylated to the non-reducing polyketide synthase ZEA1 and is further condensed with three malonyl-CoAs without reductive tailoring to yield a mixed reduced/unreduced nonaketide. ZEA1 must be able to interact with ZEA2 to facilitate starter-unit acyltransfer and initiate polyketide biosynthesis. ZEA1 also mediates the required C2-C7 cyclization to form the resorcylate core and catalyzes the formation of the macrolactone. ZEA1 exhibits broad starter-unit specificities toward fatty acyl-CoAs ranging in sizes between C6 and C16 and displays the highest activity toward decanoyl-CoA. ZEB1 is then responsible for the chemical conversion of beta-zearalenonol (beta-ZOL) to ZEA in the biosynthetic pathway. This chain is Non-reducing polyketide synthase ZEA1, found in Gibberella zeae (strain ATCC MYA-4620 / CBS 123657 / FGSC 9075 / NRRL 31084 / PH-1) (Wheat head blight fungus).